The sequence spans 329 residues: Transmembrane protein I329L (329 aa).

The N-terminal stretch at 1 to 31 (MLRVFIFFVFLGSGLAGKVKSPITCKYFISK) is a signal peptide. Residues N32, N39, N44, N58, N76, N82, N101, N185, and N219 are each glycosylated (N-linked (GlcNAc...) asparagine; by host). The Extracellular portion of the chain corresponds to 32-239 (NNTWYKYNVT…NTERYKNCYP (208 aa)). Residues 240-260 (FVLVSIICSCISSLFLLICLL) traverse the membrane as a helical segment. Over 261–329 (RTICKKYSCT…EKKVSCSRRK (69 aa)) the chain is Cytoplasmic.

The protein belongs to the asfivirus I329L family. In terms of processing, highly glycosylated.

Its subcellular location is the host endoplasmic reticulum membrane. It is found in the host Golgi apparatus membrane. Viral TLR3 homolog that probably prevents TLR3 dimerization and subsequent induction of IFN. Inhibits dsRNA-stimulated activation of NF-kB and IRF3. This is Transmembrane protein I329L from Ornithodoros (relapsing fever ticks).